The primary structure comprises 540 residues: Glucose-6-phosphate isomerase (540 aa).

Residue E351 is the Proton donor of the active site. Catalysis depends on residues H382 and K506.

The protein belongs to the GPI family.

The protein localises to the cytoplasm. It carries out the reaction alpha-D-glucose 6-phosphate = beta-D-fructose 6-phosphate. The protein operates within carbohydrate biosynthesis; gluconeogenesis. It participates in carbohydrate degradation; glycolysis; D-glyceraldehyde 3-phosphate and glycerone phosphate from D-glucose: step 2/4. In terms of biological role, catalyzes the reversible isomerization of glucose-6-phosphate to fructose-6-phosphate. The polypeptide is Glucose-6-phosphate isomerase (Corynebacterium glutamicum (strain R)).